A 335-amino-acid chain; its full sequence is MFLDQITIELRAGKGGNGVVAWRKEKYLPKGGPYGGNGGVGGSIIIESATHVYSFESYRNIRFLKAEDGQSGATNNRSGRNGKDLVLVVPEGTLLRDVETREIIYDFAKDGERLVICRGGKGGKGNTFFKTSTNRAPTKATPGKPGEVRQVELELKLIADIGLVGFPNAGKSTLFNTLAKTEVKVGAYPFTTLQPVLGLVPCREKLYQKPWIIADIPGIIEGAHQNRGLGLDFLRHIERTRLLLFVVDICGCERSSPEEDLRILMDELLHYKEDLADKGRIIALNKIDDLLPDERQERLENFQRLFPSEQFVMLSGLTGEGVDLLNSLFTNRLSV.

The Obg domain occupies 1-158; that stretch reads MFLDQITIEL…RQVELELKLI (158 aa). In terms of domain architecture, OBG-type G spans 159 to 334; that stretch reads ADIGLVGFPN…LNSLFTNRLS (176 aa). GTP-binding positions include 165–172, 190–194, 215–218, 285–288, and 315–317; these read GFPNAGKS, FTTLQ, DIPG, NKID, and SGL. Positions 172 and 192 each coordinate Mg(2+).

Belongs to the TRAFAC class OBG-HflX-like GTPase superfamily. OBG GTPase family. In terms of assembly, monomer. The cofactor is Mg(2+).

The protein resides in the cytoplasm. Functionally, an essential GTPase which binds GTP, GDP and possibly (p)ppGpp with moderate affinity, with high nucleotide exchange rates and a fairly low GTP hydrolysis rate. Plays a role in control of the cell cycle, stress response, ribosome biogenesis and in those bacteria that undergo differentiation, in morphogenesis control. The sequence is that of GTPase Obg from Chlamydia caviae (strain ATCC VR-813 / DSM 19441 / 03DC25 / GPIC) (Chlamydophila caviae).